The chain runs to 226 residues: MACLEIPQQPQLVCQKATPSDPAGCDGGPGGPTEGDLECLVCREPYSGVRPPKLLGCQHAFCAVCLKLLLCVQDDAWSIPCPLCRKVTAVPGGLVCTLRDQEKVLERLARPGLEVPLRPQGLANPATLTAGQPREAGEEEQDAVTTNRAAARRLAAHLLLLVLLIILILPFIYPGVIRWVLSFLETLALLLALLFCSHPGQQDGCMPTPRTLFCRERKPSEIASIS.

The RING-type zinc finger occupies 39-85 (CLVCREPYSGVRPPKLLGCQHAFCAVCLKLLLCVQDDAWSIPCPLCR). Residues 121–143 (GLANPATLTAGQPREAGEEEQDA) form a disordered region. Helical transmembrane passes span 157 to 177 (HLLLLVLLIILILPFIYPGVI) and 179 to 199 (WVLSFLETLALLLALLFCSHP).

Interacts with BNIP1. Post-translationally, polyubiquitinated. 'Lys-29' autoubiquitination leads to proteasomal degradation.

It is found in the endoplasmic reticulum membrane. It carries out the reaction S-ubiquitinyl-[E2 ubiquitin-conjugating enzyme]-L-cysteine + [acceptor protein]-L-lysine = [E2 ubiquitin-conjugating enzyme]-L-cysteine + N(6)-ubiquitinyl-[acceptor protein]-L-lysine.. It functions in the pathway protein modification; protein ubiquitination. Functionally, E3 ubiquitin protein ligase that is part of an apoptotic signaling pathway activated by endoplasmic reticulum stress. Stimulates the expression of proteins specific of the unfolded protein response (UPR), ubiquitinates BNIP1 and regulates its localization to the mitochondrion and induces calcium release from the endoplasmic reticulum that ultimately leads to cell apoptosis. Plays a role in the maintenance of intestinal homeostasis and clearance of enteric pathogens. Upon NOD2 stimulation, ubiquitinates the ER stress sensor activating transcription factor 6/ATF6 and promotes the unfolded protein response UPR. Participates in basal level of autophagy maintenance by regulating the ubiquitination of EPHB2. Upon stimulation by ligand EFNB1, ubiquitinates EPHB2 and further recruits MAP1LC3B for autophagy induction. Controls nutrient sensing by ubiquitinating Sestrin-2/SESN2, which is an intracellular sensor of cytosolic leucine and inhibitor of mTORC1 activity. This is E3 ubiquitin-protein ligase RNF186 from Bos taurus (Bovine).